We begin with the raw amino-acid sequence, 378 residues long: Cytochrome b (378 aa).

Transmembrane regions (helical) follow at residues 34–54 (FGSLLGLCLIIQILTGLFLAM), 78–99 (WLLRTLHANGASFFFICIYLHV), 114–134 (WLIGVIILFLVMGTAFMGYVL), and 179–199 (FFTFHFILPFIVLAMTMIHLL). Heme b contacts are provided by His-84 and His-98. Heme b contacts are provided by His-183 and His-197. Residue His-202 participates in a ubiquinone binding. A run of 4 helical transmembrane segments spans residues 227 to 247 (FKDIVGFIVMIFILISLVLIS), 289 to 309 (LGGVIALVLSIAILMILPFYN), 321 to 341 (INQVMFWSMLVTVILLTWIGA), and 348 to 368 (YVLIGQILTVVYFLYYLVNPL).

The protein belongs to the cytochrome b family. The main subunits of complex b-c1 are: cytochrome b, cytochrome c1 and the Rieske protein. Heme b is required as a cofactor.

The protein localises to the mitochondrion inner membrane. In terms of biological role, component of the ubiquinol-cytochrome c reductase complex (complex III or cytochrome b-c1 complex) that is part of the mitochondrial respiratory chain. The b-c1 complex mediates electron transfer from ubiquinol to cytochrome c. Contributes to the generation of a proton gradient across the mitochondrial membrane that is then used for ATP synthesis. The chain is Cytochrome b (mt:Cyt-b) from Drosophila melanogaster (Fruit fly).